Consider the following 73-residue polypeptide: U-scoloptoxin(22)-Cw1a (73 aa).

An N-terminal signal peptide occupies residues 1–24 (MRRFVFLAFVLVLFVIANLDSSSA).

It belongs to the scoloptoxin-22 family. Contains 1 disulfide bond. In terms of tissue distribution, expressed by the venom gland.

Its subcellular location is the secreted. This Cormocephalus westwoodi (Westwood's green centipede) protein is U-scoloptoxin(22)-Cw1a.